Here is a 279-residue protein sequence, read N- to C-terminus: Large ribosomal subunit protein uL2 (279 aa).

2 disordered regions span residues 1-59 (MGIR…GGHK) and 224-279 (VAMN…KNKR). Basic residues-rich tracts occupy residues 50-59 (TTRHKGGGHK) and 269-279 (VRRRRTGKNKR).

It belongs to the universal ribosomal protein uL2 family. In terms of assembly, part of the 50S ribosomal subunit. Forms a bridge to the 30S subunit in the 70S ribosome.

Functionally, one of the primary rRNA binding proteins. Required for association of the 30S and 50S subunits to form the 70S ribosome, for tRNA binding and peptide bond formation. It has been suggested to have peptidyltransferase activity; this is somewhat controversial. Makes several contacts with the 16S rRNA in the 70S ribosome. This is Large ribosomal subunit protein uL2 from Arthrobacter sp. (strain FB24).